Reading from the N-terminus, the 82-residue chain is Large ribosomal subunit protein uL29 (82 aa).

This sequence belongs to the universal ribosomal protein uL29 family.

The sequence is that of Large ribosomal subunit protein uL29 from Trichodesmium erythraeum (strain IMS101).